We begin with the raw amino-acid sequence, 465 residues long: 3-isopropylmalate dehydratase large subunit (465 aa).

3 residues coordinate [4Fe-4S] cluster: Cys-347, Cys-407, and Cys-410. The interval Thr-417–His-443 is disordered.

It belongs to the aconitase/IPM isomerase family. LeuC type 1 subfamily. As to quaternary structure, heterodimer of LeuC and LeuD. The cofactor is [4Fe-4S] cluster.

The catalysed reaction is (2R,3S)-3-isopropylmalate = (2S)-2-isopropylmalate. The protein operates within amino-acid biosynthesis; L-leucine biosynthesis; L-leucine from 3-methyl-2-oxobutanoate: step 2/4. Functionally, catalyzes the isomerization between 2-isopropylmalate and 3-isopropylmalate, via the formation of 2-isopropylmaleate. The protein is 3-isopropylmalate dehydratase large subunit of Thermobifida fusca (strain YX).